Here is a 307-residue protein sequence, read N- to C-terminus: Nucleotide-binding protein ACP_0619 (307 aa).

Positions 1-14 are enriched in basic and acidic residues; that stretch reads MPAPEPTRRAKKDA. A disordered region spans residues 1–23; it reads MPAPEPTRRAKKDASASPSPAHP. 33–40 is an ATP binding site; sequence GLSGAGKG. 83–86 lines the GTP pocket; sequence DVRE.

This sequence belongs to the RapZ-like family.

Its function is as follows. Displays ATPase and GTPase activities. The sequence is that of Nucleotide-binding protein ACP_0619 from Acidobacterium capsulatum (strain ATCC 51196 / DSM 11244 / BCRC 80197 / JCM 7670 / NBRC 15755 / NCIMB 13165 / 161).